The sequence spans 293 residues: Ribosomal RNA small subunit methyltransferase A (293 aa).

Asn29, Leu31, Gly56, Glu77, Asp102, and Asn127 together coordinate S-adenosyl-L-methionine.

It belongs to the class I-like SAM-binding methyltransferase superfamily. rRNA adenine N(6)-methyltransferase family. RsmA subfamily.

It is found in the cytoplasm. It catalyses the reaction adenosine(1518)/adenosine(1519) in 16S rRNA + 4 S-adenosyl-L-methionine = N(6)-dimethyladenosine(1518)/N(6)-dimethyladenosine(1519) in 16S rRNA + 4 S-adenosyl-L-homocysteine + 4 H(+). Its function is as follows. Specifically dimethylates two adjacent adenosines (A1518 and A1519) in the loop of a conserved hairpin near the 3'-end of 16S rRNA in the 30S particle. May play a critical role in biogenesis of 30S subunits. The chain is Ribosomal RNA small subunit methyltransferase A from Geobacillus kaustophilus (strain HTA426).